The following is a 521-amino-acid chain: Glycogen synthase (521 aa).

ADP-alpha-D-glucose is bound at residue Lys-18.

Belongs to the glycosyltransferase 1 family. Bacterial/plant glycogen synthase subfamily.

The catalysed reaction is [(1-&gt;4)-alpha-D-glucosyl](n) + ADP-alpha-D-glucose = [(1-&gt;4)-alpha-D-glucosyl](n+1) + ADP + H(+). Its pathway is glycan biosynthesis; glycogen biosynthesis. Synthesizes alpha-1,4-glucan chains using ADP-glucose. This Bordetella petrii (strain ATCC BAA-461 / DSM 12804 / CCUG 43448) protein is Glycogen synthase.